Reading from the N-terminus, the 72-residue chain is MKKKIHPAYSQIIATCSCGNIIEIFSTVNVNLNLDICAKCHPFYTGKQRIIDTGGRVERFKKRFKLIKKDTV.

4 residues coordinate Zn(2+): Cys-16, Cys-18, Cys-37, and Cys-40.

It belongs to the bacterial ribosomal protein bL31 family. Type A subfamily. As to quaternary structure, part of the 50S ribosomal subunit. Zn(2+) serves as cofactor.

In terms of biological role, binds the 23S rRNA. The sequence is that of Large ribosomal subunit protein bL31 from Buchnera aphidicola subsp. Schizaphis graminum (strain Sg).